The following is a 174-amino-acid chain: Protein COFACTOR ASSEMBLY OF COMPLEX C SUBUNIT B CCB3, chloroplastic (174 aa).

The N-terminal 39 residues, 1 to 39, are a transit peptide targeting the chloroplast; that stretch reads MTTVTTSFVSFSPALMIFQKKSRRSSPNFRNRSTSLPIV. The Lumenal segment spans residues 40 to 78; it reads SATLSHIEEAATTTNLIRQTNSISESLRNISLADLDPGT. The chain crosses the membrane as a helical span at residues 79 to 99; the sequence is AKLAIGILGPALSAFGFLFIL. Over 100-147 the chain is Stromal; that stretch reads RIVMSWYPKLPVDKFPYVLAYAPTEPILVQTRKVIPPLAGVDVTPVVW. The helical transmembrane segment at 148–168 threads the bilayer; it reads FGLVSFLSEILVGPQGLLVLV. Over 169 to 174 the chain is Lumenal; it reads SQQQVN.

The protein belongs to the YggT family.

The protein resides in the plastid. The protein localises to the chloroplast thylakoid membrane. In terms of biological role, required for the biogenesis and accumulation of native cytochrome b6 in the thylakoid membrane. Controls the conversion of apocytochrome b6 to holocytochrome b6. Required for covalent binding of the c-type heme to cytochrome b6. The chain is Protein COFACTOR ASSEMBLY OF COMPLEX C SUBUNIT B CCB3, chloroplastic from Arabidopsis thaliana (Mouse-ear cress).